The chain runs to 339 residues: DNA-directed RNA polymerase subunit alpha (339 aa).

The segment at 1-233 is alpha N-terminal domain (alpha-NTD); the sequence is MVREEVAGST…DLFLPFLHAE (233 aa). The segment at 264 to 339 is alpha C-terminal domain (alpha-CTD); sequence KKGIPLNCIF…IDLLKNKLSF (76 aa).

The protein belongs to the RNA polymerase alpha chain family. In plastids the minimal PEP RNA polymerase catalytic core is composed of four subunits: alpha, beta, beta', and beta''. When a (nuclear-encoded) sigma factor is associated with the core the holoenzyme is formed, which can initiate transcription.

It localises to the plastid. Its subcellular location is the chloroplast. The enzyme catalyses RNA(n) + a ribonucleoside 5'-triphosphate = RNA(n+1) + diphosphate. Functionally, DNA-dependent RNA polymerase catalyzes the transcription of DNA into RNA using the four ribonucleoside triphosphates as substrates. In Elymus californicus (California bottlebrush grass), this protein is DNA-directed RNA polymerase subunit alpha.